Consider the following 824-residue polypeptide: Fibroblast growth factor receptor 2 (824 aa).

The signal sequence occupies residues 1 to 21; the sequence is MFSWSYLMGLVMVATATLSLA. Residues 22 to 374 are Extracellular-facing; it reads RPSYNIAEDT…LDSSSSEYTE (353 aa). The region spanning 25-125 is the Ig-like C2-type 1 domain; it reads YNIAEDTTLE…ETRYFIVNIT (101 aa). A disulfide bridge links C62 with C107. Residues N83, N123, and N128 are each glycosylated (N-linked (GlcNAc...) asparagine). Positions 125-152 are disordered; it reads TDGNSSGDDEDDNDGSEDFTNDNNHKRA. Residues 131–144 show a composition bias toward acidic residues; it reads GDDEDDNDGSEDFT. Ig-like C2-type domains lie at 153–246 and 254–356; these read PYWT…YHLD and PPIL…AWLT. The heparin-binding stretch occupies residues 160–177; sequence KLEKKLHAVPAANTVKFR. A disulfide bridge links C178 with C230. Residues N227, N240, N264, N295, N316, and N329 are each glycosylated (N-linked (GlcNAc...) asparagine). C277 and C340 are joined by a disulfide. Residues 375–395 traverse the membrane as a helical segment; the sequence is IAIYCVGGFLIACMIGTIMMC. Over 396 to 824 the chain is Cytoplasmic; it reads HMKGRGKKSD…PLKHEATQPA (429 aa). At Y463 the chain carries Phosphotyrosine; by autocatalysis. Residues 478–767 form the Protein kinase domain; that stretch reads LTLGKPLGEG…LTQTTNEEYL (290 aa). Residues 484 to 492, K514, 562 to 564, and N568 each bind ATP; these read LGEGCFGQV and EYA. Y583 is subject to Phosphotyrosine; by autocatalysis. D623 acts as the Proton acceptor in catalysis. Phosphotyrosine; by autocatalysis occurs at positions 653, 654, and 766. The segment at 801–824 is disordered; sequence SMNLAFPNPNTQMAPLKHEATQPA.

This sequence belongs to the protein kinase superfamily. Tyr protein kinase family. Fibroblast growth factor receptor subfamily. Monomer. Homodimer after ligand binding. Post-translationally, autophosphorylated. Binding of FGF family members together with heparan sulfate proteoglycan or heparin promotes receptor dimerization and autophosphorylation on tyrosine residues. Autophosphorylation occurs in trans between the two FGFR molecules present in the dimer. In terms of processing, N-glycosylated in the endoplasmic reticulum. The N-glycan chains undergo further maturation to an Endo H-resistant form in the Golgi apparatus. Ubiquitinated. FGFR2 is rapidly ubiquitinated after autophosphorylation, leading to internalization and degradation. Subject to degradation both in lysosomes and by the proteasome.

It localises to the cell membrane. It is found in the golgi apparatus. The protein resides in the cytoplasmic vesicle. It carries out the reaction L-tyrosyl-[protein] + ATP = O-phospho-L-tyrosyl-[protein] + ADP + H(+). Present in an inactive conformation in the absence of bound ligand. Ligand binding leads to dimerization and activation by autophosphorylation on tyrosine residues. In terms of biological role, tyrosine-protein kinase that acts as a cell-surface receptor for fibroblast growth factors and plays an essential role in the regulation of cell proliferation, differentiation, migration and apoptosis, and in the regulation of embryonic development. Required for normal embryonic patterning, limb bud development, lung morphogenesis, osteogenesis and skin development. Plays an essential role in the regulation of osteoblast differentiation, proliferation and apoptosis, and is required for normal skeleton development. Promotes cell proliferation in keratinocytes and immature osteoblasts, but promotes apoptosis in differentiated osteoblasts. Phosphorylates PLCG1, FRS2 and PAK4. Ligand binding leads to the activation of several signaling cascades. Activation of PLCG1 leads to the production of the cellular signaling molecules diacylglycerol and inositol 1,4,5-trisphosphate. Phosphorylation of FRS2 triggers recruitment of GRB2, GAB1, PIK3R1 and SOS1, and mediates activation of RAS, MAPK1/ERK2, MAPK3/ERK1 and the MAP kinase signaling pathway, as well as of the AKT1 signaling pathway. FGFR2 signaling is down-regulated by ubiquitination, internalization and degradation. Mutations that lead to constitutive kinase activation or impair normal FGFR2 maturation, internalization and degradation lead to aberrant signaling. Over-expressed FGFR2 promotes activation of STAT1. In Pleurodeles waltl (Iberian ribbed newt), this protein is Fibroblast growth factor receptor 2 (FGFR2).